Reading from the N-terminus, the 244-residue chain is Phosphoadenosine 5'-phosphosulfate reductase (244 aa).

The active-site Nucleophile; cysteine thiosulfonate intermediate is C239.

This sequence belongs to the PAPS reductase family. CysH subfamily.

It localises to the cytoplasm. The enzyme catalyses [thioredoxin]-disulfide + sulfite + adenosine 3',5'-bisphosphate + 2 H(+) = [thioredoxin]-dithiol + 3'-phosphoadenylyl sulfate. It functions in the pathway sulfur metabolism; hydrogen sulfide biosynthesis; sulfite from sulfate: step 3/3. Functionally, catalyzes the formation of sulfite from phosphoadenosine 5'-phosphosulfate (PAPS) using thioredoxin as an electron donor. In Shigella flexneri serotype 5b (strain 8401), this protein is Phosphoadenosine 5'-phosphosulfate reductase.